The sequence spans 238 residues: Sugar fermentation stimulation protein homolog (238 aa).

This sequence belongs to the SfsA family.

This Vibrio vulnificus (strain YJ016) protein is Sugar fermentation stimulation protein homolog.